Consider the following 801-residue polypeptide: Ent-copalyl diphosphate synthase, chloroplastic (801 aa).

K241 contacts substrate. Mg(2+)-binding residues include D373 and D375. A DXDD motif motif is present at residues 373–376 (DIDD). K459 contacts substrate.

It belongs to the terpene synthase family. Mg(2+) is required as a cofactor.

Its subcellular location is the plastid. The protein resides in the chloroplast. It carries out the reaction (2E,6E,10E)-geranylgeranyl diphosphate = ent-copalyl diphosphate. It functions in the pathway plant hormone biosynthesis; gibberellin biosynthesis. Functionally, catalyzes the conversion of geranylgeranyl diphosphate to the gibberellin precursor ent-copalyl diphosphate. This Pisum sativum (Garden pea) protein is Ent-copalyl diphosphate synthase, chloroplastic.